Here is a 355-residue protein sequence, read N- to C-terminus: Guanine nucleotide-binding protein G(z) subunit alpha (355 aa).

Residues 1-14 show a composition bias toward basic and acidic residues; that stretch reads MGCRQSSEEKEAAR. Residues 1 to 26 are disordered; it reads MGCRQSSEEKEAARRSRRIDRHLRSE. Gly2 carries the N-myristoyl glycine lipid modification. The S-palmitoyl cysteine moiety is linked to residue Cys3. The G-alpha domain occupies 32-355; sequence REIKLLLLGT…QNNLKYIGLC (324 aa). The segment at 35 to 48 is G1 motif; the sequence is KLLLLGTSNSGKST. Residues 40-47, 176-182, 201-205, 270-273, and Ala327 contribute to the GTP site; these read GTSNSGKS, LRSRDMT, DVGGQ, and NKKD. The Mg(2+) site is built by Ser47 and Thr182. A G2 motif region spans residues 174 to 182; sequence DILRSRDMT. The tract at residues 197–206 is G3 motif; it reads FKMVDVGGQR. The interval 266–273 is G4 motif; sequence ILFLNKKD. The G5 motif stretch occupies residues 325 to 330; the sequence is TCATDT.

This sequence belongs to the G-alpha family. G(i/o/t/z) subfamily. As to quaternary structure, G-proteins are composed of 3 units; alpha, beta and gamma. The alpha chain contains the guanine nucleotide binding site. Interacts with ADGRB2.

The protein resides in the membrane. Its function is as follows. Guanine nucleotide-binding proteins (G proteins) are involved as modulators or transducers in various transmembrane signaling systems. The polypeptide is Guanine nucleotide-binding protein G(z) subunit alpha (Gnaz) (Rattus norvegicus (Rat)).